Reading from the N-terminus, the 489-residue chain is MALSSIETALTKHIRSLLQTHFSTKSLKRLACSISLISCLCAGSVLLFALFTPVLQHQLHYTQFQINIIGSFTSIGMYLPLPVLGYLADCHGPVLLSVISVLFFSPGYTLAATVVQNDWSFWYLAISFGLIGCATSALYFTALLTCAKIYPKSKGLTISAPVTCYGLSSLIGSRVLKLSCLQKNGDLDLYRCFKLFSFLYFFLGLFDWVSASVVSIERDVLLRKHEDGENTPLLTDPNQEHENNDDLVPNHKSKFLKFIKDISTYVLLFSLLLSIGPSEMYITNMGSLVKAITPNSLISDQVAIHAVFSTLSRLSLGALSDFLVTNYQISRSWLLLSIIVLGFFTQIFIATSTFVKDQYYIISALSGFSYGGLFTLYPTVIFSIWGPEIFGSAWGSFMIAPAIGSTTFGMVFGLVYDSACGVFAESTTGNCVSLVFLDQLLSIRLQCSTVTHCMEGDLDQKRSLIIINHLHYIKYIYLLILRIHLSRET.

12 helical membrane passes run 34-54 (ISLI…FTPV), 68-88 (IIGS…GYLA), 94-114 (VLLS…AATV), 124-144 (LAIS…TALL), 156-175 (LTIS…GSRV), 196-216 (FSFL…VVSI), 262-282 (ISTY…EMYI), 302-324 (VAIH…DFLV), 335-355 (LLSI…STFV), 359-379 (YYII…LYPT), 403-423 (IGST…CGVF), and 463-483 (SLII…ILRI).

Belongs to the major facilitator superfamily.

The protein localises to the vacuole membrane. In terms of biological role, probable transporter. The sequence is that of Probable transporter MCH1 (MCH1) from Wickerhamomyces anomalus (Yeast).